Consider the following 429-residue polypeptide: Gamma-glutamyl phosphate reductase (429 aa).

Belongs to the gamma-glutamyl phosphate reductase family.

The protein resides in the cytoplasm. It carries out the reaction L-glutamate 5-semialdehyde + phosphate + NADP(+) = L-glutamyl 5-phosphate + NADPH + H(+). The protein operates within amino-acid biosynthesis; L-proline biosynthesis; L-glutamate 5-semialdehyde from L-glutamate: step 2/2. Its function is as follows. Catalyzes the NADPH-dependent reduction of L-glutamate 5-phosphate into L-glutamate 5-semialdehyde and phosphate. The product spontaneously undergoes cyclization to form 1-pyrroline-5-carboxylate. This chain is Gamma-glutamyl phosphate reductase, found in Bradyrhizobium sp. (strain ORS 278).